Consider the following 180-residue polypeptide: NAD(P)H-quinone oxidoreductase subunit I, chloroplastic (180 aa).

2 4Fe-4S ferredoxin-type domains span residues 55–84 (GRIH…VDWR) and 95–124 (LNYS…MTEE). [4Fe-4S] cluster contacts are provided by Cys-64, Cys-67, Cys-70, Cys-74, Cys-104, Cys-107, Cys-110, and Cys-114.

The protein belongs to the complex I 23 kDa subunit family. As to quaternary structure, NDH is composed of at least 16 different subunits, 5 of which are encoded in the nucleus. Requires [4Fe-4S] cluster as cofactor.

The protein resides in the plastid. The protein localises to the chloroplast thylakoid membrane. It carries out the reaction a plastoquinone + NADH + (n+1) H(+)(in) = a plastoquinol + NAD(+) + n H(+)(out). It catalyses the reaction a plastoquinone + NADPH + (n+1) H(+)(in) = a plastoquinol + NADP(+) + n H(+)(out). NDH shuttles electrons from NAD(P)H:plastoquinone, via FMN and iron-sulfur (Fe-S) centers, to quinones in the photosynthetic chain and possibly in a chloroplast respiratory chain. The immediate electron acceptor for the enzyme in this species is believed to be plastoquinone. Couples the redox reaction to proton translocation, and thus conserves the redox energy in a proton gradient. The chain is NAD(P)H-quinone oxidoreductase subunit I, chloroplastic from Hordeum vulgare (Barley).